We begin with the raw amino-acid sequence, 644 residues long: 1-deoxy-D-xylulose-5-phosphate synthase (644 aa).

Residues His78 and 120–122 (GHA) contribute to the thiamine diphosphate site. Residue Asp149 participates in Mg(2+) binding. Thiamine diphosphate contacts are provided by residues 150–151 (AA), Asn178, and Glu373. Position 178 (Asn178) interacts with Mg(2+).

Belongs to the transketolase family. DXPS subfamily. As to quaternary structure, homodimer. It depends on Mg(2+) as a cofactor. Thiamine diphosphate serves as cofactor.

The enzyme catalyses D-glyceraldehyde 3-phosphate + pyruvate + H(+) = 1-deoxy-D-xylulose 5-phosphate + CO2. The protein operates within metabolic intermediate biosynthesis; 1-deoxy-D-xylulose 5-phosphate biosynthesis; 1-deoxy-D-xylulose 5-phosphate from D-glyceraldehyde 3-phosphate and pyruvate: step 1/1. Its function is as follows. Catalyzes the acyloin condensation reaction between C atoms 2 and 3 of pyruvate and glyceraldehyde 3-phosphate to yield 1-deoxy-D-xylulose-5-phosphate (DXP). The sequence is that of 1-deoxy-D-xylulose-5-phosphate synthase from Chlamydia felis (strain Fe/C-56) (Chlamydophila felis).